A 186-amino-acid polypeptide reads, in one-letter code: Putative thiamine-phosphate synthase 2 (186 aa).

4-amino-2-methyl-5-(diphosphooxymethyl)pyrimidine-binding positions include 35–39 (QLREK) and Asn67. Glu68 is a binding site for Mg(2+). A 4-amino-2-methyl-5-(diphosphooxymethyl)pyrimidine-binding site is contributed by Ser105. 131–133 (TSS) provides a ligand contact to 2-[(2R,5Z)-2-carboxy-4-methylthiazol-5(2H)-ylidene]ethyl phosphate. Position 134 (His134) interacts with 4-amino-2-methyl-5-(diphosphooxymethyl)pyrimidine. 2-[(2R,5Z)-2-carboxy-4-methylthiazol-5(2H)-ylidene]ethyl phosphate-binding positions include Gly161 and 181 to 182 (IS).

This sequence belongs to the thiamine-phosphate synthase family. Mg(2+) is required as a cofactor.

It catalyses the reaction 2-[(2R,5Z)-2-carboxy-4-methylthiazol-5(2H)-ylidene]ethyl phosphate + 4-amino-2-methyl-5-(diphosphooxymethyl)pyrimidine + 2 H(+) = thiamine phosphate + CO2 + diphosphate. The enzyme catalyses 2-(2-carboxy-4-methylthiazol-5-yl)ethyl phosphate + 4-amino-2-methyl-5-(diphosphooxymethyl)pyrimidine + 2 H(+) = thiamine phosphate + CO2 + diphosphate. The catalysed reaction is 4-methyl-5-(2-phosphooxyethyl)-thiazole + 4-amino-2-methyl-5-(diphosphooxymethyl)pyrimidine + H(+) = thiamine phosphate + diphosphate. It participates in cofactor biosynthesis; thiamine diphosphate biosynthesis; thiamine phosphate from 4-amino-2-methyl-5-diphosphomethylpyrimidine and 4-methyl-5-(2-phosphoethyl)-thiazole: step 1/1. Condenses 4-methyl-5-(beta-hydroxyethyl)thiazole monophosphate (THZ-P) and 2-methyl-4-amino-5-hydroxymethyl pyrimidine pyrophosphate (HMP-PP) to form thiamine monophosphate (TMP). This is Putative thiamine-phosphate synthase 2 (thiE2) from Aquifex aeolicus (strain VF5).